A 186-amino-acid chain; its full sequence is Threonylcarbamoyl-AMP synthase (186 aa).

The YrdC-like domain maps to 3–186; that stretch reads ILSLSECVDR…IINGSLIRHG (184 aa).

It belongs to the SUA5 family. TsaC subfamily.

Its subcellular location is the cytoplasm. The catalysed reaction is L-threonine + hydrogencarbonate + ATP = L-threonylcarbamoyladenylate + diphosphate + H2O. In terms of biological role, required for the formation of a threonylcarbamoyl group on adenosine at position 37 (t(6)A37) in tRNAs that read codons beginning with adenine. Catalyzes the conversion of L-threonine, HCO(3)(-)/CO(2) and ATP to give threonylcarbamoyl-AMP (TC-AMP) as the acyladenylate intermediate, with the release of diphosphate. This chain is Threonylcarbamoyl-AMP synthase, found in Buchnera aphidicola subsp. Baizongia pistaciae (strain Bp).